Reading from the N-terminus, the 305-residue chain is UDP-3-O-acyl-N-acetylglucosamine deacetylase (305 aa).

Zn(2+)-binding residues include His79, His238, and Asp242. Residue His265 is the Proton donor of the active site.

The protein belongs to the LpxC family. The cofactor is Zn(2+).

It carries out the reaction a UDP-3-O-[(3R)-3-hydroxyacyl]-N-acetyl-alpha-D-glucosamine + H2O = a UDP-3-O-[(3R)-3-hydroxyacyl]-alpha-D-glucosamine + acetate. The protein operates within glycolipid biosynthesis; lipid IV(A) biosynthesis; lipid IV(A) from (3R)-3-hydroxytetradecanoyl-[acyl-carrier-protein] and UDP-N-acetyl-alpha-D-glucosamine: step 2/6. Its function is as follows. Catalyzes the hydrolysis of UDP-3-O-myristoyl-N-acetylglucosamine to form UDP-3-O-myristoylglucosamine and acetate, the committed step in lipid A biosynthesis. The sequence is that of UDP-3-O-acyl-N-acetylglucosamine deacetylase from Vibrio campbellii (strain ATCC BAA-1116).